A 295-amino-acid polypeptide reads, in one-letter code: HTH-type transcriptional regulator ShiR (295 aa).

In terms of domain architecture, HTH lysR-type spans 1 to 58; it reads MEIRWLEGFIAVAEELHFSNAAIRLGMPQSPLSQLIRRLESELGQKLFDRSTRSVELT. Residues 18–37 constitute a DNA-binding region (H-T-H motif); that stretch reads FSNAAIRLGMPQSPLSQLIR.

Belongs to the LysR transcriptional regulatory family.

Activates expression of the shikimate transporter ShiA in the presence of shikimate. Binds to the shiA promoter region. The chain is HTH-type transcriptional regulator ShiR from Corynebacterium glutamicum (strain R).